The chain runs to 859 residues: ATP-dependent RNA helicase DDX24 (859 aa).

Position 17 is an N6-acetyllysine (lysine 17). Serine 60 carries the post-translational modification Phosphoserine. Positions 61–170 are disordered; the sequence is PAKNPSSLFS…KGLEPSQSTA (110 aa). Position 71 is an N6-acetyllysine (lysine 71). A phosphoserine mark is found at serine 82 and serine 94. Residues 94-105 show a composition bias toward basic residues; sequence SPKKKIKLKKSK. Residues 106-115 are compositionally biased toward polar residues; it reads NVATEGTSTQ. Residues 125–139 are compositionally biased toward acidic residues; the sequence is LEAQGDDMVCDDPEA. Residues 192-220 carry the Q motif motif; the sequence is SAWKDLFVPRPVLRALSFLGFSAPTPIQA. The 305-residue stretch at 224 to 528 folds into the Helicase ATP-binding domain; sequence APAIRDKLDI…RILHKKHTKK (305 aa). 237 to 244 contributes to the ATP binding site; that stretch reads AETGSGKT. The tract at residues 262–300 is disordered; that stretch reads NAAPPPSNTEAPPGETRTEAGAETRSPGKAEAESDALPD. Positions 277–293 are enriched in basic and acidic residues; the sequence is TRTEAGAETRSPGKAEA. Serine 287 and serine 295 each carry phosphoserine. Position 302 is a phosphothreonine (threonine 302). The segment at 326 to 376 is disordered; sequence SDQALLFGDDDAGEGPSSLIREKPVPKQNENEEENLDKEQTGNLKQELDDK. Lysine 370 participates in a covalent cross-link: Glycyl lysine isopeptide (Lys-Gly) (interchain with G-Cter in SUMO2). Positions 471–474 match the DEAD box motif; sequence DEAD. A Helicase C-terminal domain is found at 578–723; it reads YLYYFLMQYP…LFPVQTKYMD (146 aa). Residues lysine 624, lysine 808, and lysine 825 each participate in a glycyl lysine isopeptide (Lys-Gly) (interchain with G-Cter in SUMO2) cross-link. Composition is skewed to polar residues over residues 799–814 and 823–833; these read PLFT…TQSG and PSKSESALSCL. Positions 799-859 are disordered; that stretch reads PLFTESQKTK…EQPQPSTSAN (61 aa).

This sequence belongs to the DEAD box helicase family. DDX24/MAK5 subfamily. Interacts with FADD. Interacts with RIPK1; this interaction disrupts RLR signaling activation of IFN-dependent transcription factor IRF7. Interacts with NIP7. Interacts with EP300; this interaction prevents TP53 acetylation mediated by EP300. In terms of assembly, (Microbial infection) Interacts with HIV-1 virus Gag and Rev proteins. In terms of processing, ubiquitinated by MDM2 without targeting DDX24 for proteasomal degradation. Instead, polyubiquitinated DDX24 promotes interaction with NIP7, a component of pre-rRNP processing complex, and associates with pre-rRNA molecules and pre-ribosomal particles. As to expression, ubiquitous. Most abundant in heart and brain, but with lowest levels in thymus and small intestine.

Its subcellular location is the cytoplasm. The protein localises to the nucleus. The enzyme catalyses ATP + H2O = ADP + phosphate + H(+). Its function is as follows. ATP-dependent RNA helicase that plays a role in various aspects of RNA metabolism including pre-mRNA splicing and is thereby involved in different biological processes such as cell cycle regulation or innate immunity. Plays an inhibitory role in TP53 transcriptional activity and subsequently in TP53 controlled cell growth arrest and senescence by inhibiting its EP300 mediated acetylation. Negatively regulates cytosolic RNA-mediated innate immune signaling at least in part by affecting RIPK1/IRF7 interactions. Alternatively, possesses antiviral activity by recognizing gammaherpesvirus transcripts in the context of lytic reactivation. Plays an essential role in cell cycle regulation in vascular smooth muscle cells by interacting with and regulating FANCA (Fanconi anemia complementation group A) mRNA. Functionally, (Microbial infection) Plays a positive role in HIV-1 infection by promoting Rev-dependent nuclear export of viral RNAs and their packaging into virus particles. This is ATP-dependent RNA helicase DDX24 (DDX24) from Homo sapiens (Human).